Here is a 379-residue protein sequence, read N- to C-terminus: Succinyl-diaminopimelate desuccinylase (379 aa).

His70 is a binding site for Zn(2+). Asp72 is an active-site residue. Asp103 contacts Zn(2+). The active-site Proton acceptor is Glu137. Residues Glu138, Glu166, and His352 each contribute to the Zn(2+) site.

This sequence belongs to the peptidase M20A family. DapE subfamily. In terms of assembly, homodimer. It depends on Zn(2+) as a cofactor. Requires Co(2+) as cofactor.

It carries out the reaction N-succinyl-(2S,6S)-2,6-diaminopimelate + H2O = (2S,6S)-2,6-diaminopimelate + succinate. It participates in amino-acid biosynthesis; L-lysine biosynthesis via DAP pathway; LL-2,6-diaminopimelate from (S)-tetrahydrodipicolinate (succinylase route): step 3/3. Functionally, catalyzes the hydrolysis of N-succinyl-L,L-diaminopimelic acid (SDAP), forming succinate and LL-2,6-diaminopimelate (DAP), an intermediate involved in the bacterial biosynthesis of lysine and meso-diaminopimelic acid, an essential component of bacterial cell walls. In Burkholderia pseudomallei (strain 1106a), this protein is Succinyl-diaminopimelate desuccinylase.